The chain runs to 261 residues: uncharacterized protein (261 aa).

One can recognise a Response regulatory domain in the interval 7-122 (TAVLADDEPL…RLASCCEKLQ (116 aa)). Asp-54 carries the post-translational modification 4-aspartylphosphate. Positions 157-261 (LKASKGEEIH…RALQHLFKVS (105 aa)) constitute an HTH LytTR-type domain.

This is an uncharacterized protein from Vibrio cholerae serotype O1 (strain ATCC 39315 / El Tor Inaba N16961).